We begin with the raw amino-acid sequence, 72 residues long: UPF0150 protein jhp_0960 (72 aa).

Belongs to the UPF0150 family.

The polypeptide is UPF0150 protein jhp_0960 (Helicobacter pylori (strain J99 / ATCC 700824) (Campylobacter pylori J99)).